A 145-amino-acid polypeptide reads, in one-letter code: Heat shock protein hsp-16.2 (145 aa).

In terms of domain architecture, sHSP spans 32–137; it reads VCRISPSESS…QGRSIPIQQA (106 aa).

Belongs to the small heat shock protein (HSP20) family.

The polypeptide is Heat shock protein hsp-16.2 (Caenorhabditis elegans).